The sequence spans 143 residues: Hypoxic response protein 1 (143 aa).

CBS domains are found at residues 8-65 (MNAG…GLDP) and 73-131 (LARD…IVQF). A disulfide bridge links cysteine 14 with cysteine 39. The Zn(2+) site is built by histidine 97 and histidine 122.

Homodimer.

The protein localises to the secreted. Its function is as follows. Unlike some other CBS-domain containing proteins does not seem to bind AMP. The polypeptide is Hypoxic response protein 1 (hrp1) (Mycobacterium tuberculosis (strain CDC 1551 / Oshkosh)).